The sequence spans 863 residues: Disintegrin and metalloproteinase domain-containing protein 15 (863 aa).

The first 17 residues, 1–17 (MRLALLWALGLLGAGSP), serve as a signal peptide directing secretion. Residues 18-206 (LPSWPLPNIG…LGQRHIRRRR (189 aa)) constitute a propeptide that is removed on maturation. Residues 22 to 45 (PLPNIGGTEEQQAESEKAPREPLE) are disordered. The segment covering 35-44 (ESEKAPREPL) has biased composition (basic and acidic residues). Positions 177–184 (HTCALSWR) match the Cysteine switch motif. C179 contacts Zn(2+). Over 207–696 (DVVTETKTVE…QLKATSSLTT (490 aa)) the chain is Extracellular. The Peptidase M12B domain maps to 213–414 (KTVELVIVAD…GMGSCLFERL (202 aa)). N237 is a glycosylation site (N-linked (GlcNAc...) asparagine). Disulfide bonds link C323-C409, C365-C393, C367-C376, and C480-C500. H348 is a Zn(2+) binding site. E349 is a catalytic residue. Zn(2+) contacts are provided by H352 and H358. N-linked (GlcNAc...) asparagine glycosylation is found at N389 and N392. The Disintegrin domain occupies 421 to 508 (AAFCGNMFVE…QCPPDVSLGD (88 aa)). The Cell attachment site signature appears at 484 to 486 (RGD). N606 and N611 each carry an N-linked (GlcNAc...) asparagine glycan. 3 disulfide bridges follow: C657–C667, C661–C673, and C675–C684. Residues 657 to 685 (CRSKCHGHGVCDSNRHCYCEEGWAPPDCT) enclose the EGF-like domain. The chain crosses the membrane as a helical span at residues 697 to 717 (GLLLSLLVLLVLVMLGASYWY). Phosphotyrosine; by HCK and LCK is present on residues Y715 and Y735. At 718–863 (RARLHQRLCQ…PPPTVSSLYL (146 aa)) the chain is on the cytoplasmic side. A disordered region spans residues 736 to 863 (RAAQSGPSER…PPPTVSSLYL (128 aa)). Over residues 767–778 (PAPPSRPLPPDP) the composition is skewed to pro residues. The segment covering 779–789 (VSKRLQAELAD) has biased composition (basic and acidic residues). Pro residues-rich tracts occupy residues 791 to 800 (PNPPTRPLPA) and 813 to 824 (AKPPPPRKPLPA). Short sequence motifs (SH3-binding) lie at residues 815–821 (PPPPRKP) and 850–856 (RPAPPPP).

Interacts with ITAGV-ITGB3 (vitronectin receptor). Interacts with SH3GL2 and SNX9; this interaction occurs preferentially with ADAM15 precursor, rather than the processed form, suggesting it occurs in a secretory pathway compartment prior to the medial Golgi. Interacts with ITAG9-ITGB1. Interacts specifically with Src family protein-tyrosine kinases (PTKs). Interacts with SH3PXD2A. Interacts with ITAGV-ITGB1. Interacts with GRB2, HCK, ITSN1, ITSN2, LYN, MAPK1, MAPK3, NCF1, NCK1, nephrocystin, PTK6, SNX33, LCK and SRC. The cofactor is Zn(2+). The precursor is cleaved by a furin endopeptidase. In terms of processing, phosphorylation increases association with PTKs. Expressed in colon and small intestine. Expressed in airway smooth muscle and glomerular mesangial cells (at protein level). Ubiquitously expressed. Overexpressed in atherosclerotic lesions. Constitutively expressed in cultured endothelium and smooth muscle. Expressed in chondrocytes. Expressed in airway smooth muscle and glomerular mesangial cells.

Its subcellular location is the endomembrane system. It is found in the cell junction. The protein localises to the adherens junction. It localises to the cell projection. The protein resides in the cilium. Its subcellular location is the flagellum. It is found in the cytoplasmic vesicle. The protein localises to the secretory vesicle. It localises to the acrosome. With respect to regulation, inhibited by hydroxamate-type metalloproteinase inhibitors such as marimastat. Inhibited by metalloproteinase inhibitor 2 (TIMP-2) and TIMP-3 at nanomolar concentrations. Not significantly inhibited by TIMP-1 at concentrations of up to 100 nM. Not activated by PMA or ionomycin. Its function is as follows. Active metalloproteinase with gelatinolytic and collagenolytic activity. Plays a role in the wound healing process. Mediates both heterotypic intraepithelial cell/T-cell interactions and homotypic T-cell aggregation. Inhibits beta-1 integrin-mediated cell adhesion and migration of airway smooth muscle cells. Suppresses cell motility on or towards fibronectin possibly by driving alpha-v/beta-1 integrin (ITAGV-ITGB1) cell surface expression via ERK1/2 inactivation. Cleaves E-cadherin in response to growth factor deprivation. Plays a role in glomerular cell migration. Plays a role in pathological neovascularization. May play a role in cartilage remodeling. May be proteolytically processed, during sperm epididymal maturation and the acrosome reaction. May play a role in sperm-egg binding through its disintegrin domain. In Homo sapiens (Human), this protein is Disintegrin and metalloproteinase domain-containing protein 15 (ADAM15).